A 513-amino-acid chain; its full sequence is ATP synthase subunit alpha (513 aa).

Residue 169 to 176 coordinates ATP; that stretch reads GDRQTGKT.

The protein belongs to the ATPase alpha/beta chains family. As to quaternary structure, F-type ATPases have 2 components, CF(1) - the catalytic core - and CF(0) - the membrane proton channel. CF(1) has five subunits: alpha(3), beta(3), gamma(1), delta(1), epsilon(1). CF(0) has three main subunits: a(1), b(2) and c(9-12). The alpha and beta chains form an alternating ring which encloses part of the gamma chain. CF(1) is attached to CF(0) by a central stalk formed by the gamma and epsilon chains, while a peripheral stalk is formed by the delta and b chains.

Its subcellular location is the cell inner membrane. The catalysed reaction is ATP + H2O + 4 H(+)(in) = ADP + phosphate + 5 H(+)(out). Produces ATP from ADP in the presence of a proton gradient across the membrane. The alpha chain is a regulatory subunit. In Actinobacillus succinogenes (strain ATCC 55618 / DSM 22257 / CCUG 43843 / 130Z), this protein is ATP synthase subunit alpha.